A 32-amino-acid chain; its full sequence is Fimbrin sef21 (32 aa).

The protein resides in the fimbrium. The protein is Fimbrin sef21 of Salmonella enteritidis.